Consider the following 571-residue polypeptide: Urease subunit alpha (571 aa).

Ni(2+) contacts are provided by H138, H140, and K221. Residue K221 is modified to N6-carboxylysine. H223 is a substrate binding site. Ni(2+)-binding residues include H250 and H276. The active-site Proton donor is the H324. A Ni(2+)-binding site is contributed by D364.

It belongs to the metallo-dependent hydrolases superfamily. Urease alpha subunit family. In terms of assembly, heterotrimer of UreA (gamma), UreB (beta) and UreC (alpha) subunits. Three heterotrimers associate to form the active enzyme. Ni cation is required as a cofactor. Post-translationally, carboxylation allows a single lysine to coordinate two nickel ions.

It localises to the cytoplasm. The enzyme catalyses urea + 2 H2O + H(+) = hydrogencarbonate + 2 NH4(+). Its pathway is nitrogen metabolism; urea degradation; CO(2) and NH(3) from urea (urease route): step 1/1. In Staphylococcus aureus (strain JH9), this protein is Urease subunit alpha.